The primary structure comprises 629 residues: Plastin-1 (629 aa).

Residue methionine 1 is modified to N-acetylmethionine. 2 consecutive EF-hand domains span residues 11–46 (EELE…ASLP) and 51–86 (KVRE…LKSK). Aspartate 24, aspartate 26, serine 28, tyrosine 30, glutamate 35, aspartate 64, asparagine 66, aspartate 68, lysine 70, and glutamate 75 together coordinate Ca(2+). Actin-binding stretches follow at residues 108-380 (TSTI…CLHK) and 381-625 (PNNN…GKGL). Calponin-homology (CH) domains follow at residues 122 to 238 (EEEK…KVGL), 266 to 376 (LSPE…NTYP), 395 to 504 (SKEE…RRYT), and 516 to 625 (KVND…GKGL).

Monomer. In terms of processing, phosphorylated. In small intestine, colon, and kidney; relatively lower levels of expression are detected in the lung and stomach.

It localises to the cytoplasm. It is found in the cell projection. The protein localises to the stereocilium. Functionally, actin-bundling protein. In the inner ear, it is required for stereocilia formation. Mediates liquid packing of actin filaments that is necessary for stereocilia to grow to their proper dimensions. The protein is Plastin-1 (PLS1) of Homo sapiens (Human).